We begin with the raw amino-acid sequence, 487 residues long: Sorting nexin-4 (487 aa).

The interval 1-59 (MDHDDFDSVSWRHGPDSDISRPTTSGTDTAESPETRRDPNGKRRMSSASEIPQAGPHAD) is disordered. Residues 20-32 (SRPTTSGTDTAES) show a composition bias toward polar residues. Residues 70–192 (VLECRVDTPI…IFLESPDWNA (123 aa)) enclose the PX domain. Residues Arg113, Thr115, Lys139, and Arg158 each coordinate a 1,2-diacyl-sn-glycero-3-phospho-(1D-myo-inositol-3-phosphate). Residues 395 to 430 (EQSRRERMRKLELRIDELTREVESAKTTSEMFDEEV) adopt a coiled-coil conformation.

This sequence belongs to the sorting nexin family.

It is found in the cytoplasm. The protein localises to the cytosol. It localises to the preautophagosomal structure membrane. The protein resides in the endosome membrane. Its function is as follows. Sorting nexin, involved in the separation or division of vacuoles throughout the entire life cycle of the cells. Involved in retrieval of late-Golgi SNAREs from post-Golgi endosomes to the trans-Golgi network, for cytoplasm to vacuole transport (Cvt), and autophagy of large cargos including mitophagy, pexophagy and glycophagy. This is Sorting nexin-4 (snx4) from Emericella nidulans (strain FGSC A4 / ATCC 38163 / CBS 112.46 / NRRL 194 / M139) (Aspergillus nidulans).